The sequence spans 352 residues: Ribosomal RNA large subunit methyltransferase M (352 aa).

S-adenosyl-L-methionine-binding positions include serine 184, 217-220 (APGG), aspartate 236, aspartate 256, and aspartate 272. The active-site Proton acceptor is the lysine 301.

It belongs to the class I-like SAM-binding methyltransferase superfamily. RNA methyltransferase RlmE family. RlmM subfamily. In terms of assembly, monomer.

The protein resides in the cytoplasm. The catalysed reaction is cytidine(2498) in 23S rRNA + S-adenosyl-L-methionine = 2'-O-methylcytidine(2498) in 23S rRNA + S-adenosyl-L-homocysteine + H(+). Its function is as follows. Catalyzes the 2'-O-methylation at nucleotide C2498 in 23S rRNA. The chain is Ribosomal RNA large subunit methyltransferase M from Pseudomonas paraeruginosa (strain DSM 24068 / PA7) (Pseudomonas aeruginosa (strain PA7)).